Here is a 253-residue protein sequence, read N- to C-terminus: Imidazole glycerol phosphate synthase subunit HisF (253 aa).

Active-site residues include Asp11 and Asp130.

This sequence belongs to the HisA/HisF family. As to quaternary structure, heterodimer of HisH and HisF.

Its subcellular location is the cytoplasm. The enzyme catalyses 5-[(5-phospho-1-deoxy-D-ribulos-1-ylimino)methylamino]-1-(5-phospho-beta-D-ribosyl)imidazole-4-carboxamide + L-glutamine = D-erythro-1-(imidazol-4-yl)glycerol 3-phosphate + 5-amino-1-(5-phospho-beta-D-ribosyl)imidazole-4-carboxamide + L-glutamate + H(+). The protein operates within amino-acid biosynthesis; L-histidine biosynthesis; L-histidine from 5-phospho-alpha-D-ribose 1-diphosphate: step 5/9. Functionally, IGPS catalyzes the conversion of PRFAR and glutamine to IGP, AICAR and glutamate. The HisF subunit catalyzes the cyclization activity that produces IGP and AICAR from PRFAR using the ammonia provided by the HisH subunit. The sequence is that of Imidazole glycerol phosphate synthase subunit HisF from Lysinibacillus sphaericus (strain C3-41).